Reading from the N-terminus, the 49-residue chain is MGKRKANHTISGMNAASAQGQGAGYNEEFANENLTPAERQNNKKRKKNQ.

Residues 1–49 are disordered; that stretch reads MGKRKANHTISGMNAASAQGQGAGYNEEFANENLTPAERQNNKKRKKNQ. Over residues 8–20 the composition is skewed to polar residues; the sequence is HTISGMNAASAQG.

The protein belongs to the SspO family.

Its subcellular location is the spore core. In Bacillus anthracis (strain A0248), this protein is Small, acid-soluble spore protein O.